We begin with the raw amino-acid sequence, 358 residues long: Ion-translocating oxidoreductase complex subunit D (358 aa).

Transmembrane regions (helical) follow at residues 19-39, 41-61, 79-99, and 125-145; these read IMLW…YYFG, GVVL…FIAI, LTAL…IIII, and IGYV…MPPI. FMN phosphoryl threonine is present on Thr186. Transmembrane regions (helical) follow at residues 220–240, 248–268, 271–291, 297–317, and 321–341; these read FAQG…FLIL, IPVA…FTGF, LSAI…FIAT, SITP…VYLI, and GNYP…VPLI.

It belongs to the NqrB/RnfD family. The complex is composed of six subunits: RnfA, RnfB, RnfC, RnfD, RnfE and RnfG. The cofactor is FMN.

The protein localises to the cell inner membrane. Functionally, part of a membrane-bound complex that couples electron transfer with translocation of ions across the membrane. The chain is Ion-translocating oxidoreductase complex subunit D from Haemophilus influenzae (strain 86-028NP).